We begin with the raw amino-acid sequence, 53 residues long: UPF0391 membrane protein TM1040_2720 (53 aa).

A run of 2 helical transmembrane segments spans residues 4–24 (WALA…GGIA) and 29–48 (GIAQ…ALIL).

The protein belongs to the UPF0391 family.

It localises to the cell membrane. This Ruegeria sp. (strain TM1040) (Silicibacter sp.) protein is UPF0391 membrane protein TM1040_2720.